The primary structure comprises 693 residues: Triadin (693 aa).

Residues 1-47 lie on the Cytoplasmic side of the membrane; that stretch reads MTEITAEGNASTTTTVIDNKNGCIPKSPGKVLKRSVTEDIVTTFSSP. Residues 48 to 68 form a helical membrane-spanning segment; that stretch reads AAWLLVIALIITWSAVAIVMF. Residues 69-693 lie on the Lumenal side of the membrane; sequence DLVDYKNFSA…NSPGQKQQEQ (625 aa). Residues 117-130 are compositionally biased toward acidic residues; sequence EGDEDDEDADEDID. Disordered regions lie at residues 117–260, 278–649, and 666–693; these read EGDE…AVHE, GDLK…QTRP, and FQFP…QQEQ. Basic and acidic residues-rich tracts occupy residues 131-241 and 249-260; these read KGEI…KETP and KKDDKEMPAVHE. The residue at position 301 (Ser301) is a Phosphoserine. Residues 305–352 show a composition bias toward basic and acidic residues; the sequence is LEEKEKEEKKKMEKKDTSDTKKKEKEVKKKSEETTIDGKGKEPGKPPE. Residues 354–364 are compositionally biased toward polar residues; sequence KQMTAKLTTQA. 2 stretches are compositionally biased toward basic and acidic residues: residues 366–427 and 438–502; these read ARKD…KEEI and GKKE…KEAK. N-linked (GlcNAc...) asparagine glycosylation is present at Asn515. Composition is skewed to basic and acidic residues over residues 526-547 and 558-579; these read VKPE…DKPK and DSGK…REEN. The N-linked (GlcNAc...) asparagine glycan is linked to Asn584. The span at 587–637 shows a compositional bias: basic and acidic residues; that stretch reads KAEKPGKIPKDSKEAPASKKDKEDSKEAPTSKKDKEDSKDVPHSKKDKEVT. Over residues 672–693 the composition is skewed to polar residues; sequence PVQQPGENPGKTNSPGQKQQEQ.

As to quaternary structure, homooligomer of variable subunit number; disulfide-linked. Interacts with CASQ1 and RYR1 in skeletal muscle. Interacts with CASQ2. Phosphorylated by CaMK2. Post-translationally, N-glycosylated. Detected in heart (at protein level). Detected in heart.

The protein localises to the sarcoplasmic reticulum membrane. In terms of biological role, contributes to the regulation of lumenal Ca2+ release via the sarcoplasmic reticulum calcium release channels RYR1 and RYR2, a key step in triggering skeletal and heart muscle contraction. Required for normal organization of the triad junction, where T-tubules and the sarcoplasmic reticulum terminal cisternae are in close contact. Required for normal skeletal muscle strength. Plays a role in excitation-contraction coupling in the heart and in regulating the rate of heart beats. This is Triadin from Mus musculus (Mouse).